An 80-amino-acid chain; its full sequence is Acyl carrier protein (80 aa).

The Carrier domain occupies 4–79; the sequence is EAILEKVRSI…DAVKYIEDKQ (76 aa). At Ser-39 the chain carries O-(pantetheine 4'-phosphoryl)serine.

This sequence belongs to the acyl carrier protein (ACP) family. 4'-phosphopantetheine is transferred from CoA to a specific serine of apo-ACP by AcpS. This modification is essential for activity because fatty acids are bound in thioester linkage to the sulfhydryl of the prosthetic group.

It is found in the cytoplasm. Its pathway is lipid metabolism; fatty acid biosynthesis. Its function is as follows. Carrier of the growing fatty acid chain in fatty acid biosynthesis. In Prochlorococcus marinus (strain SARG / CCMP1375 / SS120), this protein is Acyl carrier protein.